The sequence spans 98 residues: NADH-ubiquinone oxidoreductase chain 4L (98 aa).

The next 3 helical transmembrane spans lie at 1–21 (MSPI…GMLV), 26–46 (LMAS…MIAL), and 61–81 (IILL…LVSI).

This sequence belongs to the complex I subunit 4L family. Core subunit of respiratory chain NADH dehydrogenase (Complex I) which is composed of 45 different subunits.

Its subcellular location is the mitochondrion inner membrane. The catalysed reaction is a ubiquinone + NADH + 5 H(+)(in) = a ubiquinol + NAD(+) + 4 H(+)(out). Functionally, core subunit of the mitochondrial membrane respiratory chain NADH dehydrogenase (Complex I) which catalyzes electron transfer from NADH through the respiratory chain, using ubiquinone as an electron acceptor. Part of the enzyme membrane arm which is embedded in the lipid bilayer and involved in proton translocation. The sequence is that of NADH-ubiquinone oxidoreductase chain 4L (MT-ND4L) from Chlorocebus sabaeus (Green monkey).